The chain runs to 197 residues: Imidazoleglycerol-phosphate dehydratase (197 aa).

It belongs to the imidazoleglycerol-phosphate dehydratase family.

It is found in the cytoplasm. The catalysed reaction is D-erythro-1-(imidazol-4-yl)glycerol 3-phosphate = 3-(imidazol-4-yl)-2-oxopropyl phosphate + H2O. It functions in the pathway amino-acid biosynthesis; L-histidine biosynthesis; L-histidine from 5-phospho-alpha-D-ribose 1-diphosphate: step 6/9. The chain is Imidazoleglycerol-phosphate dehydratase from Pseudomonas fluorescens (strain ATCC BAA-477 / NRRL B-23932 / Pf-5).